A 456-amino-acid chain; its full sequence is Phosphomannomutase (456 aa).

Ser98 (phosphoserine intermediate) is an active-site residue. 4 residues coordinate Mg(2+): Ser98, Asp245, Asp247, and Asp249.

Belongs to the phosphohexose mutase family. The cofactor is Mg(2+).

It carries out the reaction alpha-D-mannose 1-phosphate = D-mannose 6-phosphate. The protein operates within nucleotide-sugar biosynthesis; GDP-alpha-D-mannose biosynthesis; alpha-D-mannose 1-phosphate from D-fructose 6-phosphate: step 2/2. Functionally, involved in the biosynthesis of the capsular polysaccharide colanic acid. In Escherichia coli (strain K12), this protein is Phosphomannomutase (manB).